Here is a 288-residue protein sequence, read N- to C-terminus: Octanoyl-[GcvH]:protein N-octanoyltransferase (288 aa).

The BPL/LPL catalytic domain maps to 44 to 253 (AGGPPTFRLW…VLESAMGPQV (210 aa)). Catalysis depends on Cys-148, which acts as the Acyl-thioester intermediate. A disordered region spans residues 269 to 288 (GREGASETDPRRVAYGVDRP). A compositionally biased stretch (basic and acidic residues) spans 272-288 (GASETDPRRVAYGVDRP).

The protein belongs to the octanoyltransferase LipL family.

The catalysed reaction is N(6)-octanoyl-L-lysyl-[glycine-cleavage complex H protein] + L-lysyl-[lipoyl-carrier protein] = N(6)-octanoyl-L-lysyl-[lipoyl-carrier protein] + L-lysyl-[glycine-cleavage complex H protein]. The protein operates within protein modification; protein lipoylation via endogenous pathway; protein N(6)-(lipoyl)lysine from octanoyl-[acyl-carrier-protein]. Its function is as follows. Catalyzes the amidotransfer (transamidation) of the octanoyl moiety from octanoyl-GcvH to the lipoyl domain of the E2 subunit of lipoate-dependent enzymes. In Kyrpidia tusciae (strain DSM 2912 / NBRC 15312 / T2) (Bacillus tusciae), this protein is Octanoyl-[GcvH]:protein N-octanoyltransferase.